Reading from the N-terminus, the 31-residue chain is Ranatuerin-2Ca (31 aa).

Cys-24 and Cys-29 form a disulfide bridge.

In terms of tissue distribution, expressed by the skin glands.

The protein localises to the secreted. Its function is as follows. Antibacterial activity against Gram-positive bacterium S.aureus and Gram-negative bacterium E.coli. Has activity against C.albicans. This chain is Ranatuerin-2Ca, found in Lithobates clamitans (Green frog).